Here is a 172-residue protein sequence, read N- to C-terminus: Large ribosomal subunit protein uL10 (172 aa).

It belongs to the universal ribosomal protein uL10 family. In terms of assembly, part of the ribosomal stalk of the 50S ribosomal subunit. The N-terminus interacts with L11 and the large rRNA to form the base of the stalk. The C-terminus forms an elongated spine to which L12 dimers bind in a sequential fashion forming a multimeric L10(L12)X complex.

In terms of biological role, forms part of the ribosomal stalk, playing a central role in the interaction of the ribosome with GTP-bound translation factors. The protein is Large ribosomal subunit protein uL10 of Lawsonia intracellularis (strain PHE/MN1-00).